Reading from the N-terminus, the 571-residue chain is MAYSVVRLRKVSALGISRVLQADKGSLWRFHFEPEFGDLLRLGVLTRNYRKNSGSPKFDFTGTGTTSKFDFTDLTCPHTWYPIARKKKRKVILHVGPTNSGKTYSALKHLEQSSSGVYCGPLRLLAWEVAKRLNKANVPCDLITGQEKDLVEGATHKAVTVEMADVTSVYDCAIIDEIQMVGCKQRGFAFTRALLGIAADELHLCGDPAVVPLVEDILKVTGDDVEVHTYERLSPLVPLKVPVSSVSSIKTGDCLVTFSRKDIYAYKKTIERAGKHLCSVVYGSLPPETRTAQATRFNDETNDFDVLVASDAIGMGLNLNISRIIFSTLQKYDGSETRDLTVSEIKQIAGRAGRFQSKFPIGEVTCLHKEDLPLLHSSLKSPSPILERAGLFPTFDLLSGYSQAHPTHGLYQILEHFVENAKLSSNYFISNVEDMMKVAAIVDELPLGLQEKYLFVVSPVDVNDEISGQGLAQFAQNFSKAGIVRLREILAPDRVKVPKTPTELKELESIHKVLDLYVWLSLRLEDSFPDREVAASQKSICNLLIEQFLEGNRLNSPARFSRYLRRQKLSE.

The N-terminal 56 residues, 1–56, are a transit peptide targeting the mitochondrion; that stretch reads MAYSVVRLRKVSALGISRVLQADKGSLWRFHFEPEFGDLLRLGVLTRNYRKNSGSP. The region spanning 83 to 212 is the Helicase ATP-binding domain; that stretch reads IARKKKRKVI…HLCGDPAVVP (130 aa). 96-103 contributes to the ATP binding site; sequence GPTNSGKT. The short motif at 176 to 179 is the DEIH box; degenerate element; sequence DEIQ. A Helicase C-terminal domain is found at 213 to 399; it reads LVEDILKVTG…GLFPTFDLLS (187 aa).

This sequence belongs to the DExH box helicase family. In terms of assembly, homodimer; in free form. Component of the mitochondrial degradosome (mtEXO) complex which is a heteropentamer containing 2 copies of SUPV3L1 and 3 copies of PNPT1. Requires Mg(2+) as cofactor. Mn(2+) serves as cofactor. As to expression, weakly expressed.

The protein localises to the nucleus. It is found in the mitochondrion matrix. It localises to the mitochondrion nucleoid. The enzyme catalyses ATP + H2O = ADP + phosphate + H(+). Activated by the presence of mitochondrial RNA. Functionally, major helicase player in mitochondrial RNA metabolism. Component of the mitochondrial degradosome (mtEXO) complex, that degrades 3' overhang double-stranded RNA with a 3'-to-5' directionality in an ATP-dependent manner. ATPase and ATP-dependent multisubstrate helicase, able to unwind double-stranded (ds) DNA and RNA, and RNA/DNA heteroduplexes in the 5'-to-3' direction. Plays a role in the RNA surveillance system in mitochondria; regulates the stability of mature mRNAs, the removal of aberrantly formed mRNAs and the rapid degradation of non coding processing intermediates. Required during pollen development. In Arabidopsis thaliana (Mouse-ear cress), this protein is DExH-box ATP-dependent RNA helicase DExH16, mitochondrial.